A 385-amino-acid chain; its full sequence is GDP-mannose-dependent alpha-(1-6)-phosphatidylinositol monomannoside mannosyltransferase (385 aa).

GDP-alpha-D-mannose-binding residues include Arg205, Lys210, Val262, and Glu299.

It belongs to the glycosyltransferase group 1 family. Glycosyltransferase 4 subfamily.

The enzyme catalyses a 1,2-diacyl-sn-glycero-3-phospho-[alpha-D-mannopyranosyl-(1&lt;-&gt;6)-D-myo-inositol] + GDP-alpha-D-mannose = a 2,6-O-bis(alpha-D-mannopyranosyl)-1-phosphatidyl-1D-myo-inositol + GDP + H(+). It catalyses the reaction a 1,2-diacyl-sn-glycero-3-phospho-[alpha-D-6-acyl-mannopyranosyl-(1&lt;-&gt;6)-D-myo-inositol] + GDP-alpha-D-mannose = a 2-O-(alpha-D-mannosyl)-6-O-(6-O-acyl-alpha-D-mannosyl)-1-phosphatidyl-1D-myo-inositol + GDP + H(+). Its pathway is phospholipid metabolism; phosphatidylinositol metabolism. Functionally, involved in the biosynthesis of phosphatidyl-myo-inositol mannosides (PIM) which are early precursors in the biosynthesis of lipomannans (LM) and lipoarabinomannans (LAM). Catalyzes the addition of a mannosyl residue from GDP-D-mannose (GDP-Man) to the position 6 of a phosphatidyl-myo-inositol bearing an alpha-1,2-linked mannose residue (PIM1) to generate phosphatidyl-myo-inositol bearing alpha-1,2- and alpha-1,6-linked mannose residues (Ac1PIM2). PimB also catalyzes the addition of a mannosyl residue from GDP-Man to the position 6 of phosphatidyl-myo-inositol bearing an acylated alpha-1,2-linked mannose residue (Ac1PIM1) to generate monoacylated phosphatidyl-myo-inositol bearing alpha-1,2- and alpha-1,6-linked mannose residues (Ac1PIM2). The addition of the second mannosyl residue by PimB preferentially occurs before the acylation of the mannosyl residue transferred by PimA. Also able to transfer a mannosyl residue from GDP-Man to the position 6 of a phosphatidyl-myo-inositol (PI), but this reaction is very slow. This is GDP-mannose-dependent alpha-(1-6)-phosphatidylinositol monomannoside mannosyltransferase from Mycobacterium tuberculosis (strain CDC 1551 / Oshkosh).